A 154-amino-acid polypeptide reads, in one-letter code: NADPH-dependent 7-cyano-7-deazaguanine reductase (154 aa).

Residues 1–23 (MPNTDVSSLSMLGQQTETAQSPE) are compositionally biased toward polar residues. The interval 1-26 (MPNTDVSSLSMLGQQTETAQSPEQAV) is disordered. C52 (thioimide intermediate) is an active-site residue. Catalysis depends on D59, which acts as the Proton donor. Substrate-binding positions include 74 to 76 (VES) and 93 to 94 (HE).

It belongs to the GTP cyclohydrolase I family. QueF type 1 subfamily.

It is found in the cytoplasm. It catalyses the reaction 7-aminomethyl-7-carbaguanine + 2 NADP(+) = 7-cyano-7-deazaguanine + 2 NADPH + 3 H(+). It functions in the pathway tRNA modification; tRNA-queuosine biosynthesis. Catalyzes the NADPH-dependent reduction of 7-cyano-7-deazaguanine (preQ0) to 7-aminomethyl-7-deazaguanine (preQ1). The chain is NADPH-dependent 7-cyano-7-deazaguanine reductase from Rhizobium leguminosarum bv. trifolii (strain WSM2304).